We begin with the raw amino-acid sequence, 345 residues long: Microtubule-associated protein Jupiter (345 aa).

Residues 1–14 (MISNFDCTDNQASS) are compositionally biased toward polar residues. A disordered region spans residues 1-34 (MISNFDCTDNQASSKVLRPPGGGSSDIFGSEMPQ). A Phosphoserine modification is found at Ser24. Thr35 is subject to Phosphothreonine. The segment covering 78–87 (QKTVDSHNRL) has biased composition (basic and acidic residues). The interval 78-100 (QKTVDSHNRLFGEPTRPITPGKN) is disordered. 2 positions are modified to phosphothreonine: Thr92 and Thr96. Residues Ser105, Ser134, and Ser145 each carry the phosphoserine modification. 2 disordered regions span residues 127–241 (HYNG…QPHS) and 300–345 (EGNP…SGLW). Residues 132–145 (SGSVSSASSSVSSS) are compositionally biased toward low complexity. Polar residues predominate over residues 146-164 (TENLKMNSGSRSVFRNMST). Positions 177-191 (LCPPSPVRIEPPTPP) are enriched in pro residues. Polar residues-rich tracts occupy residues 212 to 226 (DNST…NEAC) and 315 to 326 (DYNQRQESSNAG).

This sequence belongs to the MAP Jupiter family.

It is found in the nucleus. Its subcellular location is the cytoplasm. It localises to the cytoskeleton. The protein localises to the spindle. Functionally, binds to all microtubule populations. In Drosophila erecta (Fruit fly), this protein is Microtubule-associated protein Jupiter.